The primary structure comprises 360 residues: Phospho-N-acetylmuramoyl-pentapeptide-transferase (360 aa).

The next 10 helical transmembrane spans lie at Arg-25–Ile-45, Thr-73–Leu-93, Tyr-97–Tyr-117, Trp-132–Ala-152, Thr-167–Ser-187, Gly-199–Ser-219, Ala-236–Phe-256, Val-263–Ile-283, Val-288–Val-308, and Val-338–Lys-358.

The protein belongs to the glycosyltransferase 4 family. MraY subfamily. It depends on Mg(2+) as a cofactor.

Its subcellular location is the cell inner membrane. It carries out the reaction UDP-N-acetyl-alpha-D-muramoyl-L-alanyl-gamma-D-glutamyl-meso-2,6-diaminopimeloyl-D-alanyl-D-alanine + di-trans,octa-cis-undecaprenyl phosphate = di-trans,octa-cis-undecaprenyl diphospho-N-acetyl-alpha-D-muramoyl-L-alanyl-D-glutamyl-meso-2,6-diaminopimeloyl-D-alanyl-D-alanine + UMP. Its pathway is cell wall biogenesis; peptidoglycan biosynthesis. Functionally, catalyzes the initial step of the lipid cycle reactions in the biosynthesis of the cell wall peptidoglycan: transfers peptidoglycan precursor phospho-MurNAc-pentapeptide from UDP-MurNAc-pentapeptide onto the lipid carrier undecaprenyl phosphate, yielding undecaprenyl-pyrophosphoryl-MurNAc-pentapeptide, known as lipid I. The protein is Phospho-N-acetylmuramoyl-pentapeptide-transferase of Azotobacter vinelandii (strain DJ / ATCC BAA-1303).